The chain runs to 288 residues: Elongation factor Ts (288 aa).

Residues Thr82–Val85 form an involved in Mg(2+) ion dislocation from EF-Tu region.

This sequence belongs to the EF-Ts family.

It is found in the cytoplasm. Associates with the EF-Tu.GDP complex and induces the exchange of GDP to GTP. It remains bound to the aminoacyl-tRNA.EF-Tu.GTP complex up to the GTP hydrolysis stage on the ribosome. The protein is Elongation factor Ts of Chlorobaculum parvum (strain DSM 263 / NCIMB 8327) (Chlorobium vibrioforme subsp. thiosulfatophilum).